A 215-amino-acid polypeptide reads, in one-letter code: Probable phosphoglycerate mutase GpmB (215 aa).

Substrate contacts are provided by residues 8–15 (RHGETLWN), 21–22 (QG), arginine 58, arginine 60, 82–85 (ELNM), and 151–152 (GM). The active-site Tele-phosphohistidine intermediate is histidine 9. Glutamate 82 functions as the Proton donor/acceptor in the catalytic mechanism.

It belongs to the phosphoglycerate mutase family. GpmB subfamily.

It catalyses the reaction (2R)-2-phosphoglycerate = (2R)-3-phosphoglycerate. It participates in carbohydrate degradation; glycolysis; pyruvate from D-glyceraldehyde 3-phosphate: step 3/5. The sequence is that of Probable phosphoglycerate mutase GpmB from Erwinia tasmaniensis (strain DSM 17950 / CFBP 7177 / CIP 109463 / NCPPB 4357 / Et1/99).